A 243-amino-acid polypeptide reads, in one-letter code: Ice-binding protein K3-B1 (243 aa).

A signal peptide spans 1–20 (MFSASSLLAVIALAISSVSA).

Belongs to the ice-binding protein family.

In terms of biological role, binds to the surface of ice crystals. Has low thermal hysteresis (TH) activity, which is the ability to lower the freezing point of an aqueous solution below its melting point. The TH activity of this protein is approximately 0.3 degrees Celsius at 11 mM. The chain is Ice-binding protein K3-B1 from Typhula ishikariensis (Gray snow mold fungus).